The primary structure comprises 442 residues: PTS system oligo-beta-mannoside-specific EIIC component (442 aa).

Residues 5–411 enclose the PTS EIIC type-3 domain; sequence ISQFLVPIAG…LIVFVIWFPF (407 aa). The next 11 helical transmembrane spans lie at 28 to 48, 67 to 87, 97 to 117, 138 to 157, 177 to 197, 205 to 225, 228 to 248, 286 to 306, 329 to 349, 365 to 385, and 391 to 411; these read AFML…LTNL, FGIA…FGIG, EAVF…PFII, GMFL…RRIV, FAAL…NVMV, MHDV…SGII, LIAV…QIII, TVGM…LIFM, PIIF…WVLA, LVPP…INGI, and IMGG…WFPF.

Its subcellular location is the cell membrane. Functionally, the phosphoenolpyruvate-dependent sugar phosphotransferase system (sugar PTS), a major carbohydrate active transport system, catalyzes the phosphorylation of incoming sugar substrates concomitantly with their translocation across the cell membrane. The enzyme II GmuABC PTS system is involved in the transport of oligo-glucomannans such as cellobiose or mannobiose. The protein is PTS system oligo-beta-mannoside-specific EIIC component of Bacillus subtilis (strain 168).